The following is a 139-amino-acid chain: D-ribose pyranase (139 aa).

Histidine 20 (proton donor) is an active-site residue. Substrate-binding positions include aspartate 28, histidine 106, and 128–130 (YAN).

It belongs to the RbsD / FucU family. RbsD subfamily. In terms of assembly, homodecamer.

The protein localises to the cytoplasm. It catalyses the reaction beta-D-ribopyranose = beta-D-ribofuranose. It functions in the pathway carbohydrate metabolism; D-ribose degradation; D-ribose 5-phosphate from beta-D-ribopyranose: step 1/2. Its function is as follows. Catalyzes the interconversion of beta-pyran and beta-furan forms of D-ribose. The polypeptide is D-ribose pyranase (Aliivibrio fischeri (strain MJ11) (Vibrio fischeri)).